The chain runs to 360 residues: Photosystem II protein D1 (360 aa).

The next 3 membrane-spanning stretches (helical) occupy residues 29–46, 118–133, and 142–156; these read YIGW…AATA, HFLL…QWEL, and WICV…SATA. Position 118 (H118) interacts with chlorophyll a. Y126 contacts pheophytin a. D170 and E189 together coordinate [CaMn4O5] cluster. The helical transmembrane segment at 197–218 threads the bilayer; it reads FHMLGVAGVFGGSLFSAMHGSL. H198 is a binding site for chlorophyll a. A quinone contacts are provided by residues H215 and 264–265; that span reads SF. Residue H215 participates in Fe cation binding. H272 provides a ligand contact to Fe cation. The helical transmembrane segment at 274 to 288 threads the bilayer; that stretch reads FLAAWPVVGIWFTAL. Residues H332, E333, D342, and A344 each coordinate [CaMn4O5] cluster. A propeptide spanning residues 345–360 is cleaved from the precursor; sequence AGEVAPVALTAPAING.

Belongs to the reaction center PufL/M/PsbA/D family. As to quaternary structure, PSII is composed of 1 copy each of membrane proteins PsbA, PsbB, PsbC, PsbD, PsbE, PsbF, PsbH, PsbI, PsbJ, PsbK, PsbL, PsbM, PsbT, PsbX, PsbY, PsbZ, Psb30/Ycf12, peripheral proteins PsbO, CyanoQ (PsbQ), PsbU, PsbV and a large number of cofactors. It forms dimeric complexes. The cofactor is The D1/D2 heterodimer binds P680, chlorophylls that are the primary electron donor of PSII, and subsequent electron acceptors. It shares a non-heme iron and each subunit binds pheophytin, quinone, additional chlorophylls, carotenoids and lipids. D1 provides most of the ligands for the Mn4-Ca-O5 cluster of the oxygen-evolving complex (OEC). There is also a Cl(-1) ion associated with D1 and D2, which is required for oxygen evolution. The PSII complex binds additional chlorophylls, carotenoids and specific lipids.. Post-translationally, tyr-161 forms a radical intermediate that is referred to as redox-active TyrZ, YZ or Y-Z. In terms of processing, C-terminally processed by CtpA; processing is essential to allow assembly of the oxygen-evolving complex and thus photosynthetic growth.

The protein resides in the cellular thylakoid membrane. It carries out the reaction 2 a plastoquinone + 4 hnu + 2 H2O = 2 a plastoquinol + O2. In terms of biological role, photosystem II (PSII) is a light-driven water:plastoquinone oxidoreductase that uses light energy to abstract electrons from H(2)O, generating O(2) and a proton gradient subsequently used for ATP formation. It consists of a core antenna complex that captures photons, and an electron transfer chain that converts photonic excitation into a charge separation. The D1/D2 (PsbA/PsbD) reaction center heterodimer binds P680, the primary electron donor of PSII as well as several subsequent electron acceptors. This is Photosystem II protein D1 from Microchaete diplosiphon (Fremyella diplosiphon).